Consider the following 419-residue polypeptide: MTTQLEQAWEIAKQRYAAVGVDVEEALRQLDRLPVSMHCWQGDDVAGFENPAGSLTGGIQATGNYPGKARNAEELRADLEQALSLIPGPKRLNLHAIYLESDAPVARNEIKPEHFKNWVTWAKANKLGLDFNPSCFSHPLSADGFTLSHANDEIRQFWIDHCKASRRVSAYFGEQLGTPSVMNIWVPDGMKDITVDRFAPRQRLLNALDEVISEKLDPAHHIDAVESKLFGIGAESYTVGSNEFYMGYATSRQTALCLDAGHFHPTEVISDKISAAMLYIPRLLLHVSRPVRWDSDHVVLLDDETQAIASEIIRHNLFDRVHIGLDFFDASINRIAAWVIGTRNMKKALLRALLEPTAQLRQLENDGDYTARLALLEEQKSLPWQAIWEMYCQRHDTPAGSQWLDSVRAYENAVLSQRG.

Residues His-262, Asp-294, and Asp-296 each coordinate Mn(2+).

Belongs to the rhamnose isomerase family. As to quaternary structure, homotetramer. Requires Mn(2+) as cofactor.

The protein resides in the cytoplasm. The enzyme catalyses L-rhamnopyranose = L-rhamnulose. Its pathway is carbohydrate degradation; L-rhamnose degradation; glycerone phosphate from L-rhamnose: step 1/3. In terms of biological role, catalyzes the interconversion of L-rhamnose and L-rhamnulose. The sequence is that of L-rhamnose isomerase from Klebsiella pneumoniae subsp. pneumoniae (strain ATCC 700721 / MGH 78578).